A 388-amino-acid chain; its full sequence is Oxytocin receptor (388 aa).

Residues 1–32 are disordered; sequence MEGTPAANWSVELDLGSGVPPGEEGNRTAGPP. Over 1-38 the chain is Extracellular; the sequence is MEGTPAANWSVELDLGSGVPPGEEGNRTAGPPQRNEAL. Residues Asn8 and Asn26 are each glycosylated (N-linked (GlcNAc...) asparagine). A helical transmembrane segment spans residues 39-63; it reads ARVEVAVLCLILFLALSGNACVLLA. Over 64-74 the chain is Cytoplasmic; that stretch reads LRTTRHKHSRL. The helical transmembrane segment at 75-97 threads the bilayer; the sequence is FFFMKHLSIADLVVAVFQVLPQL. Topologically, residues 98 to 113 are extracellular; sequence LWDITFRFYGPDLLCR. A disulfide bond links Cys112 and Cys187. Residues 114-135 form a helical membrane-spanning segment; that stretch reads LVKYLQVVGMFASTYLLLLMSL. The Cytoplasmic segment spans residues 136-154; the sequence is DRCLAICQPLRSLRRRTDR. The helical transmembrane segment at 155–175 threads the bilayer; it reads LAVLGTWLGCLVASAPQVHIF. Over 176 to 202 the chain is Extracellular; it reads SLREVADGVFDCWAVFIQPWGPKAYVT. Residues 203–225 form a helical membrane-spanning segment; that stretch reads WITLAVYIVPVIVLAACYGLISF. At 226 to 274 the chain is on the cytoplasmic side; that stretch reads KIWQNLRLKTAAAAAAAEGNDAAGGAGRAALARVSSVKLISKAKIRTVK. A helical transmembrane segment spans residues 275-293; that stretch reads MTFIIVLAFIVCWTPFFFV. Over 294–308 the chain is Extracellular; the sequence is QMWSVWDVNAPKEAS. Residues 309–331 form a helical membrane-spanning segment; sequence AFIIAMLLASLNSCCNPWIYMLF. Over 332 to 388 the chain is Cytoplasmic; that stretch reads TGHLFHELVQRFFCCSARYLKGSRPGETSVSKKSNSSTFVLSRRSSSQRSCSQPSSA. Positions 354 to 388 are disordered; that stretch reads SRPGETSVSKKSNSSTFVLSRRSSSQRSCSQPSSA. A phosphoserine mark is found at Ser365 and Ser367. Positions 365 to 388 are enriched in low complexity; sequence SNSSTFVLSRRSSSQRSCSQPSSA.

Belongs to the G-protein coupled receptor 1 family. Vasopressin/oxytocin receptor subfamily.

Its subcellular location is the cell membrane. Its function is as follows. Receptor for oxytocin. The activity of this receptor is mediated by G proteins which activate a phosphatidylinositol-calcium second messenger system. The sequence is that of Oxytocin receptor (Oxtr) from Rattus norvegicus (Rat).